The primary structure comprises 501 residues: MRLSPSFLSLALVIFVGEVVARNVVARASNPASVTGTRKVSLLKNVAGLPAVPTAQQVAVSSLNTDDIQGDILVGMHKQQQRFYFFTINDAATFKTHLAADIAPVVASVTQLSSVSTQPLVALNIAFSQTGLNALGVTDNVGDALFTAGQASNTVGNLKETTDNWVAQFKTPGIHGVILLASDDKSLIDQQEASIQSTFGAAISKVYSLDGAIRPGAEAGHEMFGFLDGIAQPAISGLGTPLPGQLVVDEGVIIVGGTNDPIARPADGWMTGGSFLAFRQLEQLVPEFNKYLLDNAPAVDGKSLQDRADLLGARMVGRWKSGAPIDLTPLADDPALGADPQRNNNFDFTHANFSITTDQTHCPFSAHIRKTRPRADLVAPANSIIRSGIPYGSEVSAAEAAANATTNERGLAFVSYQSQLNKGFQFLQNTWANNPGFIFGKNVQPGQDPIIGQNSGAIRSVVGLDPANPTGALSMGQFVVSRGGEYFFSPPISALTGKLAA.

Residues 1–21 form the signal peptide; sequence MRLSPSFLSLALVIFVGEVVA. Positions 22 to 60 are excised as a propeptide; the sequence is RNVVARASNPASVTGTRKVSLLKNVAGLPAVPTAQQVAV. Asp-228 functions as the Proton acceptor in the catalytic mechanism. Asn-352 carries N-linked (GlcNAc...) asparagine glycosylation. Residue His-367 participates in heme binding. N-linked (GlcNAc...) asparagine glycosylation is present at Asn-403.

Belongs to the DyP-type peroxidase family. The cofactor is heme b.

The protein resides in the secreted. It catalyses the reaction Reactive Blue 5 + 2 H2O2 = 2,2'-disulfonyl azobenzene + 3-[(4-amino-6-chloro-1,3,5-triazin-2-yl)amino]benzenesulfonate + phthalate + 2 H2O + 2 H(+). It carries out the reaction 2 a phenolic donor + H2O2 = 2 a phenolic radical donor + 2 H2O. Manganese-independent peroxidase that is able to convert a large number of compounds, but its physiological substrate is not known. In addition to classic peroxidase substrates (e.g. 2,6-dimethoxyphenol), oxidizes dyes such as Reactive Blue 5 and Reactive Black 5. The polypeptide is Dye-decolorizing peroxidase (Exidia glandulosa (Black witch's butter)).